A 241-amino-acid polypeptide reads, in one-letter code: Phosphoribosylaminoimidazole-succinocarboxamide synthase (241 aa).

The protein belongs to the SAICAR synthetase family.

The catalysed reaction is 5-amino-1-(5-phospho-D-ribosyl)imidazole-4-carboxylate + L-aspartate + ATP = (2S)-2-[5-amino-1-(5-phospho-beta-D-ribosyl)imidazole-4-carboxamido]succinate + ADP + phosphate + 2 H(+). Its pathway is purine metabolism; IMP biosynthesis via de novo pathway; 5-amino-1-(5-phospho-D-ribosyl)imidazole-4-carboxamide from 5-amino-1-(5-phospho-D-ribosyl)imidazole-4-carboxylate: step 1/2. The protein is Phosphoribosylaminoimidazole-succinocarboxamide synthase of Latilactobacillus sakei subsp. sakei (strain 23K) (Lactobacillus sakei subsp. sakei).